We begin with the raw amino-acid sequence, 186 residues long: Bilin biosynthesis protein CpeZ (186 aa).

Involved in the biosynthesis of bilin. This Synechococcus sp. (strain WH8020) protein is Bilin biosynthesis protein CpeZ (cpeZ).